Consider the following 317-residue polypeptide: Prenyl transferase paxC (317 aa).

Residues Lys53 and His86 each coordinate substrate. Positions 93 and 97 each coordinate Mg(2+). Residues Arg102, Lys186, Thr187, Gln216, Asn223, and Lys233 each contribute to the substrate site.

The protein belongs to the FPP/GGPP synthase family.

Its pathway is secondary metabolite biosynthesis. In terms of biological role, prenyl transferase; part of the gene cluster that mediates the biosynthesis of paxalline, a mycotoxin that acts as an inhibitor of mammalian maxi-K channels. PaxG, the geranylgeranyl diphosphate (GGPP) synthase is proposed to catalyze the first step in paxilline biosynthesis. Condensation of indole-3-glycerol phosphate with GGPP by paxC then forms 3-geranylgeranylindole (3-GGI), followed by epoxidation and cyclization of this intermediate (by paxM and paxB) to form paspaline. Paspaline is subsequently converted to 13-desoxypaxilline by paxP, the latter being then converted to paxilline by paxQ. Finally paxilline can be mono- and di-prenylated by paxD. The chain is Prenyl transferase paxC from Penicillium paxilli.